We begin with the raw amino-acid sequence, 360 residues long: Mannonate dehydratase (360 aa).

It belongs to the mannonate dehydratase family. Requires Fe(2+) as cofactor. The cofactor is Mn(2+).

It catalyses the reaction D-mannonate = 2-dehydro-3-deoxy-D-gluconate + H2O. The protein operates within carbohydrate metabolism; pentose and glucuronate interconversion. Its function is as follows. Catalyzes the dehydration of D-mannonate. The protein is Mannonate dehydratase of Thermotoga sp. (strain RQ2).